The sequence spans 71 residues: UPF0352 protein Spea_1764 (71 aa).

This sequence belongs to the UPF0352 family.

The protein is UPF0352 protein Spea_1764 of Shewanella pealeana (strain ATCC 700345 / ANG-SQ1).